Reading from the N-terminus, the 367-residue chain is GTPase Obg (367 aa).

Residues 1 to 158 (MFIDNVELTV…VQIRLELKLI (158 aa)) form the Obg domain. Residues 159–358 (ADVGLVGFPN…LKYALYDLVK (200 aa)) form the OBG-type G domain. GTP contacts are provided by residues 165–172 (GFPNVGKS), 190–194 (FTTLT), 212–215 (DIPG), 280–283 (TKID), and 339–341 (SAV). Residues Ser-172 and Thr-192 each contribute to the Mg(2+) site.

Belongs to the TRAFAC class OBG-HflX-like GTPase superfamily. OBG GTPase family. As to quaternary structure, monomer. Mg(2+) is required as a cofactor.

Its subcellular location is the cytoplasm. Its function is as follows. An essential GTPase which binds GTP, GDP and possibly (p)ppGpp with moderate affinity, with high nucleotide exchange rates and a fairly low GTP hydrolysis rate. Plays a role in control of the cell cycle, stress response, ribosome biogenesis and in those bacteria that undergo differentiation, in morphogenesis control. The sequence is that of GTPase Obg from Nitratiruptor sp. (strain SB155-2).